A 504-amino-acid chain; its full sequence is ATP synthase subunit alpha, chloroplastic (504 aa).

Gly170–Thr177 lines the ATP pocket. Thr257 bears the Phosphothreonine mark.

Belongs to the ATPase alpha/beta chains family. F-type ATPases have 2 components, CF(1) - the catalytic core - and CF(0) - the membrane proton channel. CF(1) has five subunits: alpha(3), beta(3), gamma(1), delta(1), epsilon(1). CF(0) has four main subunits: a, b, b' and c.

Its subcellular location is the plastid. It localises to the chloroplast thylakoid membrane. It carries out the reaction ATP + H2O + 4 H(+)(in) = ADP + phosphate + 5 H(+)(out). Functionally, produces ATP from ADP in the presence of a proton gradient across the membrane. The alpha chain is a regulatory subunit. The protein is ATP synthase subunit alpha, chloroplastic of Nasturtium officinale (Watercress).